A 449-amino-acid polypeptide reads, in one-letter code: BPI fold-containing family B member 6 (449 aa).

Positions 1 to 18 (MLCSLSLVLCGLLAGTRA) are cleaved as a signal peptide. The N-linked (GlcNAc...) asparagine glycan is linked to N115. The cysteines at positions 138 and 172 are disulfide-linked.

The protein belongs to the BPI/LBP/Plunc superfamily. BPI/LBP family.

Its subcellular location is the secreted. In Mus musculus (Mouse), this protein is BPI fold-containing family B member 6 (Bpifb6).